We begin with the raw amino-acid sequence, 221 residues long: Cytidylate kinase 1 (221 aa).

7–15 provides a ligand contact to ATP; that stretch reads GPSASGKSS.

The protein belongs to the cytidylate kinase family. Type 1 subfamily.

The protein resides in the cytoplasm. It carries out the reaction CMP + ATP = CDP + ADP. The enzyme catalyses dCMP + ATP = dCDP + ADP. This is Cytidylate kinase 1 from Borreliella burgdorferi (strain ATCC 35210 / DSM 4680 / CIP 102532 / B31) (Borrelia burgdorferi).